The sequence spans 366 residues: Dihydroorotate dehydrogenase (quinone) (366 aa).

FMN contacts are provided by residues 74–78 and Thr-98; that span reads AGFDK. Lys-78 is a substrate binding site. 123-127 serves as a coordination point for substrate; it reads NRMGF. Asn-156 and Asn-189 together coordinate FMN. Asn-189 contacts substrate. Ser-192 (nucleophile) is an active-site residue. Residue Asn-194 coordinates substrate. Residues Lys-231 and Thr-259 each coordinate FMN. 260-261 contacts substrate; it reads NT. FMN is bound by residues Gly-285, Gly-314, and 335–336; that span reads YT.

The protein belongs to the dihydroorotate dehydrogenase family. Type 2 subfamily. As to quaternary structure, monomer. FMN is required as a cofactor.

It is found in the cell membrane. The catalysed reaction is (S)-dihydroorotate + a quinone = orotate + a quinol. The protein operates within pyrimidine metabolism; UMP biosynthesis via de novo pathway; orotate from (S)-dihydroorotate (quinone route): step 1/1. Its function is as follows. Catalyzes the conversion of dihydroorotate to orotate with quinone as electron acceptor. The polypeptide is Dihydroorotate dehydrogenase (quinone) (Kineococcus radiotolerans (strain ATCC BAA-149 / DSM 14245 / SRS30216)).